Reading from the N-terminus, the 494-residue chain is Catalase isozyme 2 (494 aa).

Positions 1–29 (MDPCKFRPSSSFDTKTTTTNAGQPVWNDN) are disordered. A compositionally biased stretch (polar residues) spans 8-22 (PSSSFDTKTTTTNAG). Catalysis depends on residues histidine 65 and asparagine 138. Position 348 (tyrosine 348) interacts with heme.

It belongs to the catalase family. As to quaternary structure, homotetramer. It depends on heme as a cofactor.

Its subcellular location is the peroxisome. The protein localises to the glyoxysome. It catalyses the reaction 2 H2O2 = O2 + 2 H2O. Functionally, occurs in almost all aerobically respiring organisms and serves to protect cells from the toxic effects of hydrogen peroxide. In Hordeum vulgare (Barley), this protein is Catalase isozyme 2 (CAT2).